The following is a 376-amino-acid chain: TraB domain-containing protein (376 aa).

An N-acetylmethionine modification is found at M1. T64 bears the Phosphothreonine mark.

The chain is TraB domain-containing protein (Trabd) from Mus musculus (Mouse).